A 398-amino-acid chain; its full sequence is Acetate kinase (398 aa).

Mg(2+) is bound at residue Asn7. Residue Lys14 coordinates ATP. Residue Arg91 coordinates substrate. Catalysis depends on Asp148, which acts as the Proton donor/acceptor. Residues 208–212, 283–285, and 331–335 contribute to the ATP site; these read HLGNG, DFR, and GIGEH. Glu386 provides a ligand contact to Mg(2+).

The protein belongs to the acetokinase family. In terms of assembly, homodimer. The cofactor is Mg(2+). Requires Mn(2+) as cofactor.

Its subcellular location is the cytoplasm. It catalyses the reaction acetate + ATP = acetyl phosphate + ADP. It functions in the pathway metabolic intermediate biosynthesis; acetyl-CoA biosynthesis; acetyl-CoA from acetate: step 1/2. Functionally, catalyzes the formation of acetyl phosphate from acetate and ATP. Can also catalyze the reverse reaction. This is Acetate kinase from Clostridium botulinum (strain Alaska E43 / Type E3).